The chain runs to 150 residues: Ribosome maturation factor RimP (150 aa).

Belongs to the RimP family.

The protein resides in the cytoplasm. Its function is as follows. Required for maturation of 30S ribosomal subunits. The sequence is that of Ribosome maturation factor RimP from Acaryochloris marina (strain MBIC 11017).